Reading from the N-terminus, the 155-residue chain is Small ribosomal subunit protein uS10m (155 aa).

This sequence belongs to the universal ribosomal protein uS10 family. Component of the mitochondrial ribosome small subunit (28S) which comprises a 12S rRNA and about 30 distinct proteins.

Its subcellular location is the mitochondrion. The polypeptide is Small ribosomal subunit protein uS10m (Mrps10) (Rattus norvegicus (Rat)).